A 491-amino-acid polypeptide reads, in one-letter code: UDP-N-acetylmuramate--L-alanine ligase (491 aa).

ATP is bound at residue 126 to 132; that stretch reads GTHGKTT.

This sequence belongs to the MurCDEF family.

The protein localises to the cytoplasm. The enzyme catalyses UDP-N-acetyl-alpha-D-muramate + L-alanine + ATP = UDP-N-acetyl-alpha-D-muramoyl-L-alanine + ADP + phosphate + H(+). It participates in cell wall biogenesis; peptidoglycan biosynthesis. Cell wall formation. The protein is UDP-N-acetylmuramate--L-alanine ligase of Shigella flexneri.